Reading from the N-terminus, the 348-residue chain is NADH-cytochrome b5 reductase 2 (348 aa).

Residues 41–61 (TLLYGAAAAAVAGAGYYFLGG) traverse the membrane as a helical segment. Residues 97-202 (QGWVSLKLEE…KGPLPKYPWT (106 aa)) enclose the FAD-binding FR-type domain. Residue 205-240 (KHGHIALVAGGTGITPMFQLCRAIFNNPDDQTKVTL) coordinates FAD.

Belongs to the flavoprotein pyridine nucleotide cytochrome reductase family. The cofactor is FAD.

It localises to the mitochondrion outer membrane. It carries out the reaction 2 Fe(III)-[cytochrome b5] + NADH = 2 Fe(II)-[cytochrome b5] + NAD(+) + H(+). May mediate the reduction of outer membrane cytochrome b5. In Chaetomium globosum (strain ATCC 6205 / CBS 148.51 / DSM 1962 / NBRC 6347 / NRRL 1970) (Soil fungus), this protein is NADH-cytochrome b5 reductase 2 (MCR1).